We begin with the raw amino-acid sequence, 245 residues long: Polyhedrin (245 aa).

Residues 32 to 35 form a nuclear localization signal region; that stretch reads KRKK.

The protein belongs to the polyhedrin family.

The protein resides in the host nucleus. In terms of biological role, major component of the virus occlusion bodies which are large proteinaceous structures termed polyhedra. These structures serve as the protective package for the virus particles outside the infected host and allow natural transmission of virus between insect hosts, assisting persistence in the environment. Forms the paracrystalline lattice of polyhedra and interacts with enveloped virions as well as other accessory molecules and structures to form a mature viral occlusion body. This is Polyhedrin (PH) from Lepidoptera (butterflies and moths).